The sequence spans 63 residues: Large ribosomal subunit protein bL28 (63 aa).

The segment covering 11–20 (GNNSGASVSH) has biased composition (polar residues). A disordered region spans residues 11–30 (GNNSGASVSHSNKKTKRKWK). Over residues 21–30 (SNKKTKRKWK) the composition is skewed to basic residues.

It belongs to the bacterial ribosomal protein bL28 family.

This is Large ribosomal subunit protein bL28 from Natranaerobius thermophilus (strain ATCC BAA-1301 / DSM 18059 / JW/NM-WN-LF).